The sequence spans 212 residues: Thymidylate kinase (212 aa).

Position 11–18 (11–18 (GMEGAGKS)) interacts with ATP.

It belongs to the thymidylate kinase family.

It catalyses the reaction dTMP + ATP = dTDP + ADP. Phosphorylation of dTMP to form dTDP in both de novo and salvage pathways of dTTP synthesis. This chain is Thymidylate kinase, found in Colwellia psychrerythraea (strain 34H / ATCC BAA-681) (Vibrio psychroerythus).